The sequence spans 199 residues: LPICPSGSVNCQVSLGELFDRAVKLSHYIHFLSSEMFNEFDERYAQGRGFITKAVNGCHTASLTTPEDKEQAQQIHHEDLLNLVLGVLRSWNDPLLHLVTEVQRIKEAPDTILWKAVEIEEQNKRLLEGMEKIIGRVQPGDTGNEVYSRWSGLPSLQLADEDSRLFAFYNLLHCGRRDSHKIDNYLKLLKCRLIHDSNC.

Cystine bridges form between Cys4–Cys11, Cys58–Cys174, and Cys191–Cys199.

This sequence belongs to the somatotropin/prolactin family.

It localises to the secreted. This is Prolactin-2 from Crocodylus novaeguineae (Crocodile).